The sequence spans 374 residues: tRNA (guanine(26)-N(2))-dimethyltransferase (374 aa).

The Trm1 methyltransferase domain maps to Ile4–Ile371. Residues Arg44, Arg69, Asp87, Asp113, and Ala114 each contribute to the S-adenosyl-L-methionine site. 4 residues coordinate Zn(2+): Cys244, Cys247, Cys261, and Cys264.

Belongs to the class I-like SAM-binding methyltransferase superfamily. Trm1 family.

It carries out the reaction guanosine(26) in tRNA + 2 S-adenosyl-L-methionine = N(2)-dimethylguanosine(26) in tRNA + 2 S-adenosyl-L-homocysteine + 2 H(+). Its function is as follows. Dimethylates a single guanine residue at position 26 of a number of tRNAs using S-adenosyl-L-methionine as donor of the methyl groups. The sequence is that of tRNA (guanine(26)-N(2))-dimethyltransferase from Sulfurisphaera tokodaii (strain DSM 16993 / JCM 10545 / NBRC 100140 / 7) (Sulfolobus tokodaii).